We begin with the raw amino-acid sequence, 213 residues long: GTP cyclohydrolase 1 (213 aa).

Positions 1-27 (MDDVVKSLLQRTTSSLTKPAPARPSRE) are disordered. 3 residues coordinate Zn(2+): C100, H103, and C172.

This sequence belongs to the GTP cyclohydrolase I family. As to quaternary structure, homomer.

The enzyme catalyses GTP + H2O = 7,8-dihydroneopterin 3'-triphosphate + formate + H(+). The protein operates within cofactor biosynthesis; 7,8-dihydroneopterin triphosphate biosynthesis; 7,8-dihydroneopterin triphosphate from GTP: step 1/1. The chain is GTP cyclohydrolase 1 from Beijerinckia indica subsp. indica (strain ATCC 9039 / DSM 1715 / NCIMB 8712).